Reading from the N-terminus, the 102-residue chain is Small ribosomal subunit protein uS10 (102 aa).

This sequence belongs to the universal ribosomal protein uS10 family. As to quaternary structure, part of the 30S ribosomal subunit.

Functionally, involved in the binding of tRNA to the ribosomes. The polypeptide is Small ribosomal subunit protein uS10 (Sulfurihydrogenibium sp. (strain YO3AOP1)).